The sequence spans 75 residues: SPbeta prophage-derived uncharacterized protein YorX (75 aa).

The chain is SPbeta prophage-derived uncharacterized protein YorX (yorX) from Bacillus subtilis (strain 168).